The following is a 229-amino-acid chain: Ras-related protein RabZ (229 aa).

A disordered region spans residues 1 to 39 (MGCFHSREPTATGKTKKEEPTSAVKTNKEEKSSNYVSEP). Gly2 carries the N-myristoyl glycine lipid modification. Cys3 is lipidated: S-palmitoyl cysteine. The span at 15 to 32 (TKKEEPTSAVKTNKEEKS) shows a compositional bias: basic and acidic residues. 57–64 (GDQATGKS) contributes to the GTP binding site. The Effector region motif lies at 79–88 (HKPSPIIIDC). Residues 106–110 (DTAGQ) and 164–167 (NKCD) each bind GTP.

The protein belongs to the small GTPase superfamily. Rab family. In terms of processing, although this sequence lacks the C-terminal cysteine motifs subject to isoprenylation in other Rab proteins, it does have N-terminal myristoylation and S-palmitoylation sequence motifs.

The sequence is that of Ras-related protein RabZ (rabZ) from Dictyostelium discoideum (Social amoeba).